We begin with the raw amino-acid sequence, 285 residues long: Ribosomal RNA small subunit methyltransferase A (285 aa).

S-adenosyl-L-methionine-binding residues include Asn30, Leu32, Gly57, Glu78, Asp101, and Asn121.

The protein belongs to the class I-like SAM-binding methyltransferase superfamily. rRNA adenine N(6)-methyltransferase family. RsmA subfamily.

The protein resides in the cytoplasm. The enzyme catalyses adenosine(1518)/adenosine(1519) in 16S rRNA + 4 S-adenosyl-L-methionine = N(6)-dimethyladenosine(1518)/N(6)-dimethyladenosine(1519) in 16S rRNA + 4 S-adenosyl-L-homocysteine + 4 H(+). In terms of biological role, specifically dimethylates two adjacent adenosines (A1518 and A1519) in the loop of a conserved hairpin near the 3'-end of 16S rRNA in the 30S particle. May play a critical role in biogenesis of 30S subunits. The protein is Ribosomal RNA small subunit methyltransferase A of Treponema pallidum (strain Nichols).